The following is a 190-amino-acid chain: Peptidyl-tRNA hydrolase (190 aa).

Tyr14 serves as a coordination point for tRNA. Residue His19 is the Proton acceptor of the active site. The tRNA site is built by Tyr64, Asn66, and Asn113.

The protein belongs to the PTH family. As to quaternary structure, monomer.

The protein resides in the cytoplasm. It catalyses the reaction an N-acyl-L-alpha-aminoacyl-tRNA + H2O = an N-acyl-L-amino acid + a tRNA + H(+). Hydrolyzes ribosome-free peptidyl-tRNAs (with 1 or more amino acids incorporated), which drop off the ribosome during protein synthesis, or as a result of ribosome stalling. Its function is as follows. Catalyzes the release of premature peptidyl moieties from peptidyl-tRNA molecules trapped in stalled 50S ribosomal subunits, and thus maintains levels of free tRNAs and 50S ribosomes. The chain is Peptidyl-tRNA hydrolase from Gemmatimonas aurantiaca (strain DSM 14586 / JCM 11422 / NBRC 100505 / T-27).